Consider the following 463-residue polypeptide: Lysosomal proton-coupled steroid conjugate and bile acid symporter SLC46A3 (463 aa).

Positions 1 to 20 are cleaved as a signal peptide; the sequence is MKILFVEPAIFLSAFAMTLT. Residues 21-73 lie on the Extracellular side of the membrane; sequence SPLTTQYVYRRIWEETGNYTFSSDSNISECEKNKSSPIFAFQEEVQKKVSRFN. 3 N-linked (GlcNAc...) asparagine glycosylation sites follow: Asn38, Asn46, and Asn53. A helical transmembrane segment spans residues 74–94; it reads LQMDISGLIPGLVSTFILLSI. Residues 95-101 are Cytoplasmic-facing; that stretch reads SDHYGRK. Residues 102 to 124 form a helical membrane-spanning segment; it reads FPMILSSVGALATSVWLCLLCYF. Residues 125-133 lie on the Extracellular side of the membrane; the sequence is AFPFQLLIA. Residues 134–156 traverse the membrane as a helical segment; it reads STFIGAFCGNYTTFWGACFAYIV. The Cytoplasmic segment spans residues 157 to 170; that stretch reads DQCKEHKQKTIRIA. The helical transmembrane segment at 171-191 threads the bilayer; sequence VIDFLLGLVTGLTGLSSGYFI. Over 192 to 197 the chain is Extracellular; that stretch reads RELGFG. A helical membrane pass occupies residues 198 to 218; the sequence is WSFLIIAASLAVNLIYILFFL. Residues 219–261 lie on the Cytoplasmic side of the membrane; the sequence is GDPVKECSSQNVTMSCSEGFKNLFYRTYMLFKNASGKRRFLLC. Residues 262–282 traverse the membrane as a helical segment; sequence LLLFTTITYFFVVIGIAPIFI. Residues 283 to 294 lie on the Extracellular side of the membrane; it reads LYELDSPLCWNE. The helical transmembrane segment at 295-315 threads the bilayer; it reads VFIGYGSALGSASFLTSFLGI. The Cytoplasmic portion of the chain corresponds to 316-324; that stretch reads WLFSYCMED. Residues 325-345 form a helical membrane-spanning segment; it reads IHMAFIGIFTTMTGMVMTAFA. Topologically, residues 346-347 are extracellular; that stretch reads ST. A helical membrane pass occupies residues 348–368; it reads TLMMFLARVPFLFTIVPFSVL. Residues 369–382 lie on the Cytoplasmic side of the membrane; the sequence is RSMLSKVVRSTEQG. The chain crosses the membrane as a helical span at residues 383 to 403; sequence ILFACIAFLETLGGVTAVSTF. Over 404 to 415 the chain is Extracellular; that stretch reads NGIYSATVAWYP. Residues 416–436 traverse the membrane as a helical segment; sequence GFTFLLSAGLLLLPAISLCVV. Topologically, residues 437 to 463 are cytoplasmic; it reads KCTSWNEGSYELLIQEESSEDASDRAC. A Tyrosine-based lysosomal-sorting motif motif is present at residues 446–449; sequence YELL.

The protein belongs to the major facilitator superfamily. SLC46A family.

Its subcellular location is the lysosome membrane. The enzyme catalyses estrone 3-sulfate(out) + n H(+)(out) = estrone 3-sulfate(in) + n H(+)(in). It carries out the reaction 25-hydroxyvitamin D3 sulfate(out) + n H(+)(out) = 25-hydroxyvitamin D3 sulfate(in) + n H(+)(in). The catalysed reaction is cholate(out) + n H(+)(out) = cholate(in) + n H(+)(in). It catalyses the reaction glycocholate(out) + n H(+)(out) = glycocholate(in) + n H(+)(in). The enzyme catalyses taurocholate(out) + n H(+)(out) = taurocholate(in) + n H(+)(in). It carries out the reaction dehydroepiandrosterone 3-sulfate(out) + n H(+)(out) = dehydroepiandrosterone 3-sulfate(in) + n H(+)(in). The catalysed reaction is N-acetyl-D-muramoyl-L-alanyl-D-isoglutamine(out) + n H(+)(out) = N-acetyl-D-muramoyl-L-alanyl-D-isoglutamine(in) + n H(+)(in). It catalyses the reaction 2',3'-cGAMP(out) + n H(+)(out) = 2',3'-cGAMP(in) + n H(+)(in). Functionally, lysosomal proton-coupled steroid conjugate and bile acid transporter. Preferentially recognizes lipophilic steroid conjugates or bile acis as endogenous substrates and seems to mediate escape from lysosomes to the cytoplasm. Modulates hepatic cytosolic copper homeostasis, maybe acting as a lysosomal copper transporter and sequestering copper ions in the lysosome. Delivers pathogen-associated molecular patterns to cytosolic pattern recognition receptors as part of the innate immune response to microbes. Selectively transports bacterial muramyl dipeptide (MDP) into the cytosol for recognition by NOD2, triggering inflammatory responses. Likely acts as a redundant importer of cyclic GMP-AMP dinucleotides (cGAMPs) in monocyte and macrophage cell lineages. The transport mechanism, its electrogenicity and stoichiometry remain to be elucidated. The polypeptide is Lysosomal proton-coupled steroid conjugate and bile acid symporter SLC46A3 (SLC46A3) (Pongo abelii (Sumatran orangutan)).